The sequence spans 212 residues: Large ribosomal subunit protein uL3 (212 aa).

Positions 128–146 (RHGASRGPMKHGSKYHRRT) are enriched in basic residues. Residues 128 to 164 (RHGASRGPMKHGSKYHRRTGSLGAKGPARVFKGRNLP) form a disordered region.

It belongs to the universal ribosomal protein uL3 family. In terms of assembly, part of the 50S ribosomal subunit. Forms a cluster with proteins L14 and L19.

Functionally, one of the primary rRNA binding proteins, it binds directly near the 3'-end of the 23S rRNA, where it nucleates assembly of the 50S subunit. This is Large ribosomal subunit protein uL3 from Desulfitobacterium hafniense (strain Y51).